A 1051-amino-acid polypeptide reads, in one-letter code: Exportin-T (1051 aa).

Belongs to the exportin family.

It is found in the nucleus. It localises to the cytoplasm. Its function is as follows. tRNA nucleus export receptor which facilitates tRNA translocation across the nuclear pore complex. Involved in pre-tRNA splicing, probably by affecting the interaction of pre-tRNA with splicing endonuclease. The protein is Exportin-T (LOS1) of Eremothecium gossypii (strain ATCC 10895 / CBS 109.51 / FGSC 9923 / NRRL Y-1056) (Yeast).